The primary structure comprises 396 residues: NADH-quinone oxidoreductase subunit D (396 aa).

It belongs to the complex I 49 kDa subunit family. NDH-1 is composed of 14 different subunits. Subunits NuoB, C, D, E, F, and G constitute the peripheral sector of the complex.

It is found in the cell inner membrane. The enzyme catalyses a quinone + NADH + 5 H(+)(in) = a quinol + NAD(+) + 4 H(+)(out). Its function is as follows. NDH-1 shuttles electrons from NADH, via FMN and iron-sulfur (Fe-S) centers, to quinones in the respiratory chain. The immediate electron acceptor for the enzyme in this species is believed to be ubiquinone. Couples the redox reaction to proton translocation (for every two electrons transferred, four hydrogen ions are translocated across the cytoplasmic membrane), and thus conserves the redox energy in a proton gradient. The protein is NADH-quinone oxidoreductase subunit D of Brucella anthropi (strain ATCC 49188 / DSM 6882 / CCUG 24695 / JCM 21032 / LMG 3331 / NBRC 15819 / NCTC 12168 / Alc 37) (Ochrobactrum anthropi).